The primary structure comprises 180 residues: Trafficking protein particle complex subunit 3 (180 aa).

Cysteine 68 is lipidated: S-palmitoyl cysteine.

This sequence belongs to the TRAPP small subunits family. BET3 subfamily. As to quaternary structure, homodimer. Part of the multisubunit TRAPP (transport protein particle) complex.

It is found in the golgi apparatus. The protein resides in the cis-Golgi network. The protein localises to the endoplasmic reticulum. May play a role in vesicular transport from endoplasmic reticulum to Golgi. The polypeptide is Trafficking protein particle complex subunit 3 (TRAPPC3) (Gallus gallus (Chicken)).